The chain runs to 162 residues: ATP synthase subunit b (162 aa).

The chain crosses the membrane as a helical span at residues 6–25 (TLFTLVTFLVLMLAVGKVAW).

The protein belongs to the ATPase B chain family. In terms of assembly, F-type ATPases have 2 components, F(1) - the catalytic core - and F(0) - the membrane proton channel. F(1) has five subunits: alpha(3), beta(3), gamma(1), delta(1), epsilon(1). F(0) has three main subunits: a(1), b(2) and c(10-14). The alpha and beta chains form an alternating ring which encloses part of the gamma chain. F(1) is attached to F(0) by a central stalk formed by the gamma and epsilon chains, while a peripheral stalk is formed by the delta and b chains.

The protein localises to the cell membrane. Functionally, f(1)F(0) ATP synthase produces ATP from ADP in the presence of a proton or sodium gradient. F-type ATPases consist of two structural domains, F(1) containing the extramembraneous catalytic core and F(0) containing the membrane proton channel, linked together by a central stalk and a peripheral stalk. During catalysis, ATP synthesis in the catalytic domain of F(1) is coupled via a rotary mechanism of the central stalk subunits to proton translocation. Its function is as follows. Component of the F(0) channel, it forms part of the peripheral stalk, linking F(1) to F(0). This chain is ATP synthase subunit b, found in Lacticaseibacillus paracasei (strain ATCC 334 / BCRC 17002 / CCUG 31169 / CIP 107868 / KCTC 3260 / NRRL B-441) (Lactobacillus paracasei).